A 191-amino-acid chain; its full sequence is MCFSRADAADNYPFGTCQQRKLFPHFHPPNLIGNKFVPLRGSPHRGPGCYFSDGYGLAYDLSKIPTSIKGYTLGARTAVRFKPIQKEMTPHAGRYQKVSPQQEKHKQNFAPFNVLVPRFKNYPKDTYYPSPGAYNPEKKPPPKIAWPMKFGSPDWAQVPCLQKRTLKAELSTDKDFRKHRNRVAYLSLYYN.

As to quaternary structure, interacts with proteins involved in ciliary transport, including ARL13B, CETN1, KIF3A, RAB6A, RAB8A, TUBB1 and TUBG1. Interacts with AURKA.

Its subcellular location is the cytoplasmic vesicle. It is found in the golgi apparatus. The protein resides in the trans-Golgi network. The protein localises to the cytoplasm. In terms of biological role, during primary cilia disassembly, involved in cilia disassembly. Required specifically to control cilia retraction as well as the liberation and duplication of the basal body/centrosome. May act by stimulating AURKA activity at the basal body in a cell cycle-dependent manner. The polypeptide is Ciliary microtubule-associated protein 3 (Homo sapiens (Human)).